Consider the following 588-residue polypeptide: Putative calcium-binding mitochondrial carrier F55A11.4 (588 aa).

Positions Met1–Ala14 are enriched in polar residues. The tract at residues Met1 to Tyr25 is disordered. 4 EF-hand domains span residues Glu73–His108, Ile109–Leu139, Glu140–Pro175, and Leu176–Ser211. Ca(2+) contacts are provided by Asp86, Asp88, Asp90, Thr92, and Asp97. Positions 153, 155, 157, and 164 each coordinate Ca(2+). Solcar repeat units follow at residues Gly246–Leu332, Ile342–Thr428, and Pro440–Gly529. The next 6 helical transmembrane spans lie at Leu252–Phe269, Gly307–Tyr326, Ser352–Met365, Gly403–Tyr422, Leu446–Phe463, and Gly504–Tyr523.

Belongs to the mitochondrial carrier (TC 2.A.29) family. In terms of assembly, homodimer (via N-terminus).

The protein resides in the mitochondrion inner membrane. Functionally, mitochondrial and calcium-binding carrier that catalyzes the calcium-dependent exchange of cytoplasmic glutamate with mitochondrial aspartate across the mitochondrial inner membrane. This is Putative calcium-binding mitochondrial carrier F55A11.4 from Caenorhabditis elegans.